The primary structure comprises 233 residues: Maternal B9.15 protein (233 aa).

The segment at 135–165 is disordered; sequence KATSDYHSGTSSDEEPTNKEPKTIPKVSNPN.

Belongs to the BTG family.

The protein is Maternal B9.15 protein of Xenopus laevis (African clawed frog).